Here is a 1162-residue protein sequence, read N- to C-terminus: DNA-directed RNA polymerase subunit beta 1 (1162 aa).

The protein belongs to the RNA polymerase beta chain family. In terms of assembly, the RNAP catalytic core consists of 2 alpha, 1 beta, 1 beta' and 1 omega subunit. When a sigma factor is associated with the core the holoenzyme is formed, which can initiate transcription.

It catalyses the reaction RNA(n) + a ribonucleoside 5'-triphosphate = RNA(n+1) + diphosphate. Its function is as follows. DNA-dependent RNA polymerase catalyzes the transcription of DNA into RNA using the four ribonucleoside triphosphates as substrates. The chain is DNA-directed RNA polymerase subunit beta 1 from Nocardia farcinica (strain IFM 10152).